The chain runs to 326 residues: Cell surface glycoprotein CD200 receptor 1 (326 aa).

The first 25 residues, 1–25 (MFCFWRTSALAVLLIWGVFVAGSSC), serve as a signal peptide directing secretion. Residues 26–238 (TDKNQTTQNN…SRGGNQSLRP (213 aa)) lie on the Extracellular side of the membrane. N-linked (GlcNAc...) asparagine glycans are attached at residues asparagine 29, asparagine 34, asparagine 35, asparagine 44, asparagine 93, asparagine 101, asparagine 159, asparagine 192, asparagine 207, asparagine 221, and asparagine 233. The Ig-like V-type domain occupies 51–136 (IGTKALLCCF…YTCETVTPEG (86 aa)). Intrachain disulfides connect cysteine 58-cysteine 129 and cysteine 82-cysteine 97. In terms of domain architecture, Ig-like C2-type spans 138 to 229 (FEKNYDLQVL…GNQSLSIELS (92 aa)). 2 disulfide bridges follow: cysteine 164–cysteine 213 and cysteine 183–cysteine 201. A helical transmembrane segment spans residues 239–259 (YIPYIIPSIIILIIIGCICLL). Residues 260–326 (KISGFRKCKL…DCLTLSAIGI (67 aa)) are Cytoplasmic-facing.

This sequence belongs to the CD200R family. In terms of assembly, CD200 and CD200R1 interact via their respective N-terminal Ig-like domains. In terms of tissue distribution, expressed in granulocytes, monocytes, most T-cells and a subset of NK, NKT and B-cells (at protein level). Expressed in the spleen, lung, liver, testis, bone marrow, lymph nodes, spinal cord, kidney, uterus and small intestine. Expressed in mast and dendritic cells. Expressed in the lung of N.brasiliensis-infected mice.

Its subcellular location is the cell membrane. In terms of biological role, inhibitory receptor for the CD200/OX2 cell surface glycoprotein. Limits inflammation by inhibiting the expression of pro-inflammatory molecules including TNF-alpha, interferons, and inducible nitric oxide synthase (iNOS) in response to selected stimuli. This is Cell surface glycoprotein CD200 receptor 1 (Cd200r1) from Mus musculus (Mouse).